We begin with the raw amino-acid sequence, 344 residues long: Anthranilate phosphoribosyltransferase (344 aa).

5-phospho-alpha-D-ribose 1-diphosphate-binding positions include Gly-86, 89-90 (GD), Thr-94, 96-99 (NIST), 114-122 (KHGNKSASG), and Ser-126. Gly-86 provides a ligand contact to anthranilate. Ser-98 contacts Mg(2+). Asn-117 contacts anthranilate. An anthranilate-binding site is contributed by Arg-172. The Mg(2+) site is built by Asp-231 and Glu-232.

Belongs to the anthranilate phosphoribosyltransferase family. In terms of assembly, homodimer. Requires Mg(2+) as cofactor.

It catalyses the reaction N-(5-phospho-beta-D-ribosyl)anthranilate + diphosphate = 5-phospho-alpha-D-ribose 1-diphosphate + anthranilate. It functions in the pathway amino-acid biosynthesis; L-tryptophan biosynthesis; L-tryptophan from chorismate: step 2/5. In terms of biological role, catalyzes the transfer of the phosphoribosyl group of 5-phosphorylribose-1-pyrophosphate (PRPP) to anthranilate to yield N-(5'-phosphoribosyl)-anthranilate (PRA). This is Anthranilate phosphoribosyltransferase from Prochlorococcus marinus (strain MIT 9301).